A 203-amino-acid polypeptide reads, in one-letter code: ATP-dependent Clp protease proteolytic subunit (203 aa).

S103 functions as the Nucleophile in the catalytic mechanism. The active site involves H128.

The protein belongs to the peptidase S14 family. Fourteen ClpP subunits assemble into 2 heptameric rings which stack back to back to give a disk-like structure with a central cavity, resembling the structure of eukaryotic proteasomes.

It is found in the cytoplasm. It carries out the reaction Hydrolysis of proteins to small peptides in the presence of ATP and magnesium. alpha-casein is the usual test substrate. In the absence of ATP, only oligopeptides shorter than five residues are hydrolyzed (such as succinyl-Leu-Tyr-|-NHMec, and Leu-Tyr-Leu-|-Tyr-Trp, in which cleavage of the -Tyr-|-Leu- and -Tyr-|-Trp bonds also occurs).. In terms of biological role, cleaves peptides in various proteins in a process that requires ATP hydrolysis. Has a chymotrypsin-like activity. Plays a major role in the degradation of misfolded proteins. The protein is ATP-dependent Clp protease proteolytic subunit of Nitrosococcus oceani (strain ATCC 19707 / BCRC 17464 / JCM 30415 / NCIMB 11848 / C-107).